Reading from the N-terminus, the 428-residue chain is Glutamate-1-semialdehyde 2,1-aminomutase 1 (428 aa).

K268 carries the post-translational modification N6-(pyridoxal phosphate)lysine.

The protein belongs to the class-III pyridoxal-phosphate-dependent aminotransferase family. HemL subfamily. As to quaternary structure, homodimer. Pyridoxal 5'-phosphate is required as a cofactor.

Its subcellular location is the cytoplasm. It carries out the reaction (S)-4-amino-5-oxopentanoate = 5-aminolevulinate. Its pathway is porphyrin-containing compound metabolism; protoporphyrin-IX biosynthesis; 5-aminolevulinate from L-glutamyl-tRNA(Glu): step 2/2. This Bacillus cereus (strain G9842) protein is Glutamate-1-semialdehyde 2,1-aminomutase 1.